A 473-amino-acid chain; its full sequence is Sphingosine kinase 1 (473 aa).

Residues 83–233 (QCRGNLLVFI…VALYSVKTDN (151 aa)) form the DAGKc domain. ATP contacts are provided by residues 93–95 (NPN) and 125–129 (TTGPN). Residue 151 to 154 (SGDG) coordinates substrate. Residue Asp-153 is the Proton donor/acceptor of the active site. ATP-binding positions include Glu-158 and 184–186 (GSG). Substrate is bound at residue Asp-251. Residues Arg-258, Arg-265, and 448–450 (DGE) each bind ATP.

The cofactor is Mg(2+). In terms of tissue distribution, expressed in the majority of cholinergic and GABAergic neurons, body wall muscle, excretory canal cells, intestine, and hypodermis.

The protein localises to the presynaptic cell membrane. It localises to the cell projection. It is found in the axon. Its subcellular location is the perikaryon. The protein resides in the mitochondrion membrane. It catalyses the reaction a sphingoid base + ATP = a sphingoid 1-phosphate + ADP + H(+). The catalysed reaction is 15-methylhexadecasphing-4-enine + ATP = 15-methylhexadecasphing-4-enine 1-phosphate + ADP + H(+). The enzyme catalyses 15-methylhexadecasphinganine + ATP = 15-methylhexadecasphinganine 1-phosphate + ADP + H(+). It functions in the pathway lipid metabolism; sphingolipid metabolism. Its function is as follows. Catalyzes the phosphorylation of sphingoid bases to form sphingoid 1-phosphate (SPP), which have both intra- and extracellular functions. C.elegans contain specific sphingoid bases, which are unique or different in structure compared to the sphingoid bases found in other animals. Two examples of these distinctive compounds are: 15-methylhexadecasphinganine and 15-methylhexadecasphing-4-enine. Required for neurotransmitter release from neuromuscular junctions. Acts by recruiting the synaptic vesicle priming protein unc-13 to synapses. This Caenorhabditis elegans protein is Sphingosine kinase 1 (sphk-1).